Reading from the N-terminus, the 260-residue chain is (R)-2-hydroxyglutaryl-CoA dehydratase activating ATPase (260 aa).

ATP is bound at residue 12–16 (STASK). Residues C127 and C166 each coordinate [4Fe-4S] cluster. ATP is bound by residues Q220 and Q243.

This sequence belongs to the HgdC family. As to quaternary structure, homodimer. [4Fe-4S] cluster is required as a cofactor. Requires Mg(2+) as cofactor.

It carries out the reaction ATP + H2O = ADP + phosphate + H(+). It functions in the pathway amino-acid degradation; L-glutamate degradation via hydroxyglutarate pathway; crotonoyl-CoA from L-glutamate: step 4/5. Inactivated by exposure to air within less than 15 minutes. In terms of biological role, involved in the fermentation of L-glutamate via the hydroxyglutarate pathway. HgdC (CompA) has a very low ATPase activity, whose the role is to activate dehydratase HgdA-HgdB complex and then maintain an appropriate redox state via an ATP-dependent electron transfer. The dehydratase requires only catalytic amounts of ATP and substoichiometric amounts of HgdC (CompA) to be functional. This is (R)-2-hydroxyglutaryl-CoA dehydratase activating ATPase from Acidaminococcus fermentans (strain ATCC 25085 / DSM 20731 / CCUG 9996 / CIP 106432 / VR4).